A 200-amino-acid chain; its full sequence is MEGLTLIVVMMSSFMLGGQGQQISTPCTSSMISTFTPCLNFITGSSGGSVTPTAGCCDSLKTLTNTGMGCACLILTANVPLPTGFINRTLALALPRACKMGGVPIQCQAAGTPLPAPGQVPFLIAPPPQVSAFSPGASKAAGTTPTQAPAPDTPADGPTGPTTKSGIRPVDQPMQPTGLAQSSTSPFLPLLFISLILLNL.

Positions 1 to 20 (MEGLTLIVVMMSSFMLGGQG) are cleaved as a signal peptide. Intrachain disulfides connect cysteine 27–cysteine 72, cysteine 38–cysteine 56, cysteine 57–cysteine 98, and cysteine 70–cysteine 107. Asparagine 87 carries an N-linked (GlcNAc...) asparagine glycan. Positions 134–182 (SPGASKAAGTTPTQAPAPDTPADGPTGPTTKSGIRPVDQPMQPTGLAQS) are disordered. Positions 140–163 (AAGTTPTQAPAPDTPADGPTGPTT) are enriched in low complexity. The GPI-anchor amidated threonine moiety is linked to residue threonine 177. A propeptide spans 178–200 (GLAQSSTSPFLPLLFISLILLNL) (removed in mature form).

The protein belongs to the plant LTP family. In terms of tissue distribution, expressed in seedlings, preferentially in hypocotyls and roots. Also observed in siliques.

Its subcellular location is the cell membrane. In terms of biological role, essential protein involved in female gametophyte development. Probable lipid transfer protein. The chain is Non-specific lipid transfer protein GPI-anchored 16 from Arabidopsis thaliana (Mouse-ear cress).